Consider the following 54-residue polypeptide: Large ribosomal subunit protein eL37 (54 aa).

4 residues coordinate Zn(2+): Cys20, Cys23, Cys35, and Cys38. The C4-type zinc finger occupies 20–38 (CRRCGHHTYNVRTKRCSHC).

It belongs to the eukaryotic ribosomal protein eL37 family. It depends on Zn(2+) as a cofactor.

Binds to the 23S rRNA. The chain is Large ribosomal subunit protein eL37 (rpl37e) from Thermoplasma volcanium (strain ATCC 51530 / DSM 4299 / JCM 9571 / NBRC 15438 / GSS1).